We begin with the raw amino-acid sequence, 171 residues long: NADP-reducing hydrogenase subunit HndA (171 aa).

Cysteine 98, cysteine 103, cysteine 139, and cysteine 143 together coordinate [2Fe-2S] cluster.

Belongs to the complex I 24 kDa subunit family. Heterotetramer composed of HndA, HndB, HndC and HndD subunits. HndA and HndB could form a heterodimeric intermediate in the electron transfer between the active site of hydrogenase subunit HndD and the NADP reduction site of the reducing subunit HndC. It depends on [2Fe-2S] cluster as a cofactor.

It carries out the reaction H2 + NADP(+) = NADPH + H(+). Inhibited by oxygen. Catalyzes the reduction of NADP in the presence of molecular H(2) to yield NADPH. The chain is NADP-reducing hydrogenase subunit HndA (hndA) from Solidesulfovibrio fructosivorans (Desulfovibrio fructosivorans).